The primary structure comprises 740 residues: Glycerol dehydrogenase large subunit (740 aa).

The N-terminal stretch at 1–29 (MRRPYLLATAAGLALACSPLIAHAQFAPA) is a signal peptide. Disordered stretches follow at residues 28–105 (PAGA…GDWV) and 442–468 (LPVE…PWSV). Positions 34 to 43 (EPSSSVPGPG) are enriched in low complexity. Positions 46-58 (SEPTENSPKSQSY) are enriched in polar residues.

This sequence belongs to the bacterial PQQ dehydrogenase family. Pyrroloquinoline quinone is required as a cofactor.

The protein resides in the secreted. It catalyses the reaction glycerol + A = dihydroxyacetone + AH2. Functionally, catalyzes the oxidation of glycerol to glycerone. Also acts, more slowly, on a number of other polyols including D-sorbitol, D-arabinitol, D-mannitol, meso-erythritol, adonitol and propylene glycol. The chain is Glycerol dehydrogenase large subunit (sldA) from Gluconobacter thailandicus.